Consider the following 453-residue polypeptide: MDVNVTSSTVRGTTRAPPSKSYTHRALLAAGYSDGATVRSPLVSADTKATARAVTAFGGAVEPESGERFDDADALVVDGFDGRPAVPDDVIDCANSGTTMRLVTAAAALADGTTVLTGDESLRSRPQGPLLEALGDLGVRAESTRGNGQAPLVVSGPLAGGEVAIPGNVSSQYVTALLMAGAVTEEGVEIDLTTPLKSAPYVDITLELLDDFGIEATPVGDGGDALDGAAGAAGFVVDGGQSYAPAGGSYTVPGDFSSISYLVAAGAVAAEPGEPVRIEGAVPSAQGDSAIVEIVERMGADIEWDREAGVITVRRSELSGVEVDVGDTPDLLPTIAALGAVADGDTRIMNCEHVRYKETDRVSAMAEELEKLGAKTTEEPDTLTVHGSESDLRGASVDGRADHRIVMALAVAALVAEGTTTIRGGEHVDVSFPNFFDAMADLGIAVERDGAGE.

Over residues 1 to 12 (MDVNVTSSTVRG) the composition is skewed to polar residues. Residues 1–21 (MDVNVTSSTVRGTTRAPPSKS) are disordered. 3 residues coordinate 3-phosphoshikimate: Lys20, Ser21, and Arg25. Lys20 is a binding site for phosphoenolpyruvate. Residues Gly97 and Arg125 each contribute to the phosphoenolpyruvate site. 6 residues coordinate 3-phosphoshikimate: Ser170, Ser171, Gln172, Ser198, Asp330, and Lys357. A phosphoenolpyruvate-binding site is contributed by Gln172. Asp330 acts as the Proton acceptor in catalysis. Phosphoenolpyruvate is bound by residues Arg361 and Arg404.

It belongs to the EPSP synthase family. As to quaternary structure, monomer.

The protein localises to the cytoplasm. The catalysed reaction is 3-phosphoshikimate + phosphoenolpyruvate = 5-O-(1-carboxyvinyl)-3-phosphoshikimate + phosphate. It functions in the pathway metabolic intermediate biosynthesis; chorismate biosynthesis. Catalyzes the transfer of the enolpyruvyl moiety of phosphoenolpyruvate (PEP) to the 5-hydroxyl of shikimate-3-phosphate (S3P) to produce enolpyruvyl shikimate-3-phosphate and inorganic phosphate. This chain is 3-phosphoshikimate 1-carboxyvinyltransferase, found in Halorubrum lacusprofundi (strain ATCC 49239 / DSM 5036 / JCM 8891 / ACAM 34).